The primary structure comprises 860 residues: Leucine--tRNA ligase (860 aa).

The short motif at P42 to H52 is the 'HIGH' region element. Residues K619–S623 carry the 'KMSKS' region motif. K622 contacts ATP.

It belongs to the class-I aminoacyl-tRNA synthetase family.

Its subcellular location is the cytoplasm. It catalyses the reaction tRNA(Leu) + L-leucine + ATP = L-leucyl-tRNA(Leu) + AMP + diphosphate. This is Leucine--tRNA ligase from Escherichia coli (strain ATCC 8739 / DSM 1576 / NBRC 3972 / NCIMB 8545 / WDCM 00012 / Crooks).